The chain runs to 741 residues: Type VI secretion system spike protein VgrG1b (741 aa).

Polar residues-rich tracts occupy residues 614–629 (SIGA…NETI) and 649–663 (GNQS…SRSV). Residues 614–678 (SIGANRSESV…TSVGKDDSLD (65 aa)) form a disordered region.

This sequence belongs to the VgrG protein family.

It localises to the secreted. Its function is as follows. Part of the H1 type VI secretion system (H1-T6SS) specialized secretion system, which delivers several virulence factors in both prokaryotic and eukaryotic cells during infection. Allows the delivery of the Tse7 toxin to target cells where it exerts toxicity through its nuclease domain. The chain is Type VI secretion system spike protein VgrG1b from Pseudomonas aeruginosa (strain ATCC 15692 / DSM 22644 / CIP 104116 / JCM 14847 / LMG 12228 / 1C / PRS 101 / PAO1).